A 299-amino-acid chain; its full sequence is Glycine--tRNA ligase alpha subunit (299 aa).

It belongs to the class-II aminoacyl-tRNA synthetase family. Tetramer of two alpha and two beta subunits.

It is found in the cytoplasm. It catalyses the reaction tRNA(Gly) + glycine + ATP = glycyl-tRNA(Gly) + AMP + diphosphate. In Synechocystis sp. (strain ATCC 27184 / PCC 6803 / Kazusa), this protein is Glycine--tRNA ligase alpha subunit (glyQ).